The following is a 948-amino-acid chain: RNA polymerase-associated protein RapA (948 aa).

Residues 164 to 332 enclose the Helicase ATP-binding domain; it reads EVADRSAPRV…FARLRLLDPN (169 aa). Residue 177–184 participates in ATP binding; it reads DEVGLGKT. Positions 278–281 match the DEAH box motif; sequence DEAH. Positions 473–627 constitute a Helicase C-terminal domain; that stretch reads RVDWLIDTLK…TCPTGNALQH (155 aa).

The protein belongs to the SNF2/RAD54 helicase family. RapA subfamily. Interacts with the RNAP. Has a higher affinity for the core RNAP than for the holoenzyme. Its ATPase activity is stimulated by binding to RNAP.

Its function is as follows. Transcription regulator that activates transcription by stimulating RNA polymerase (RNAP) recycling in case of stress conditions such as supercoiled DNA or high salt concentrations. Probably acts by releasing the RNAP, when it is trapped or immobilized on tightly supercoiled DNA. Does not activate transcription on linear DNA. Probably not involved in DNA repair. The protein is RNA polymerase-associated protein RapA of Pseudomonas putida (strain ATCC 700007 / DSM 6899 / JCM 31910 / BCRC 17059 / LMG 24140 / F1).